Consider the following 136-residue polypeptide: Glutamate mutase sigma subunit (136 aa).

In terms of domain architecture, B12-binding spans 3–136 (KKKIVIGVIG…IIDLKKDFKI (134 aa)). Adenosylcob(III)alamin-binding positions include 13 to 17 (SDCHT), H16, and 61 to 63 (SSI).

The protein belongs to the methylaspartate mutase GlmS subunit family. As to quaternary structure, heterotetramer composed of 2 epsilon subunits (GlmE) and 2 sigma subunits (GlmS). GlmE exists as a homodimer and GlmS as a monomer. It depends on adenosylcob(III)alamin as a cofactor.

It carries out the reaction (2S,3S)-3-methyl-L-aspartate = L-glutamate. It participates in amino-acid degradation; L-glutamate degradation via mesaconate pathway; acetate and pyruvate from L-glutamate: step 1/4. Its function is as follows. Catalyzes the carbon skeleton rearrangement of L-glutamate to L-threo-3-methylaspartate ((2S,3S)-3-methylaspartate). The protein is Glutamate mutase sigma subunit of Fusobacterium nucleatum subsp. nucleatum (strain ATCC 25586 / DSM 15643 / BCRC 10681 / CIP 101130 / JCM 8532 / KCTC 2640 / LMG 13131 / VPI 4355).